Consider the following 326-residue polypeptide: MRTEAQVPALQPPEPGLEGAMGHRTLVLPWVLLTLCVTAGTPEVWVQVRMEATELSSFTIRCGFLGSGSISLVTVSWGGPNGAGGTTLAVLHPERGIRQWAPARQARWETQSSISLILEGSGASSPCANTTFCCKFASFPEGSWEACGSLPPSSDPGLSAPPTPAPILRADLAGILGVSGVLLFGCVYLLHLLRRHKHRPAPRLQPSRTSPQAPRARAWAPSQASQAALHVPYATINTSCRPATLDTAHPHGGPSWWASLPTHAAHRPQGPAAWASTPIPARGSFVSVENGLYAQAGERPPHTGPGLTLFPDPRGPRAMEGPLGVR.

Transmembrane regions (helical) follow at residues 26–46 (LVLP…EVWV), 62–78 (CGFL…VSWG), and 172–192 (LAGI…LLHL). Residue tyrosine 233 is modified to Phosphotyrosine. The tract at residues 296-326 (AGERPPHTGPGLTLFPDPRGPRAMEGPLGVR) is disordered.

As to quaternary structure, interacts with NECTIN2, hence competing with CD226. In terms of tissue distribution, expressed in some types of immune cells. Expressed at low levels on the surface of freshly isolated T-cells and natural killer (NK) cells, predominantly on CD8+ T-cells (mainly memory/effector, but not naive cells) and on both CD16+ and CD16- NK cells. T-cell expression levels are variable among individuals. Not detected in B-cells, naive or helper T-cells, monocytes, nor neutrophils (at protein level). Not detected in dendritic cells.

Its subcellular location is the cell membrane. In terms of biological role, cell surface receptor for NECTIN2. May act as a coinhibitory receptor that suppresses T-cell receptor-mediated signals. Following interaction with NECTIN2, inhibits T-cell proliferation. Competes with CD226 for NECTIN2-binding. The protein is Transmembrane protein PVRIG (PVRIG) of Homo sapiens (Human).